Here is a 195-residue protein sequence, read N- to C-terminus: Ephrin-A2 (195 aa).

The signal sequence occupies residues 1-16; that stretch reads MELSLVVFTVVCWVSV. The 134-residue stretch at 24-157 folds into the Ephrin RBD domain; sequence SDRHAVYWNS…KLKVYVKPTS (134 aa). N-linked (GlcNAc...) asparagine glycosylation is present at N32. Cystine bridges form between C57/C97 and C85/C146. A lipid anchor (GPI-anchor amidated cysteine) is attached at C174. The propeptide at 175 to 195 is removed in mature form; it reads GADGPCLAVLMLLLVFLLAGV.

It belongs to the ephrin family. Binds to the receptor tyrosine kinases epha2, epha3, epha4 and epha5. Interacts with epha8; activates epha8. As to expression, widespread expression in the embryo.

Its subcellular location is the cell membrane. Its function is as follows. Cell surface GPI-bound ligand for Eph receptors, a family of receptor tyrosine kinases which are crucial for migration, repulsion and adhesion during neuronal, vascular and epithelial development. Binds promiscuously Eph receptors residing on adjacent cells, leading to contact-dependent bidirectional signaling into neighboring cells. The signaling pathway downstream of the receptor is referred to as forward signaling while the signaling pathway downstream of the ephrin ligand is referred to as reverse signaling. With the epha2 receptor may play a role in bone remodeling through regulation of osteoclastogenesis and osteoblastogenesis. The chain is Ephrin-A2 (efna2) from Danio rerio (Zebrafish).